The chain runs to 1396 residues: DNA-directed RNA polymerase subunit beta' (1396 aa).

The Zn(2+) site is built by C73, C75, C88, and C91. Mg(2+)-binding residues include D467, D469, and D471. 4 residues coordinate Zn(2+): C817, C891, C898, and C901.

The protein belongs to the RNA polymerase beta' chain family. As to quaternary structure, the RNAP catalytic core consists of 2 alpha, 1 beta, 1 beta' and 1 omega subunit. When a sigma factor is associated with the core the holoenzyme is formed, which can initiate transcription. It depends on Mg(2+) as a cofactor. Zn(2+) is required as a cofactor.

The catalysed reaction is RNA(n) + a ribonucleoside 5'-triphosphate = RNA(n+1) + diphosphate. Its function is as follows. DNA-dependent RNA polymerase catalyzes the transcription of DNA into RNA using the four ribonucleoside triphosphates as substrates. The protein is DNA-directed RNA polymerase subunit beta' of Orientia tsutsugamushi (strain Ikeda) (Rickettsia tsutsugamushi).